We begin with the raw amino-acid sequence, 499 residues long: Glycerol kinase (499 aa).

Residue Thr12 coordinates ADP. Thr12, Thr13, and Ser14 together coordinate ATP. Thr12 is a sn-glycerol 3-phosphate binding site. Residue Arg16 coordinates ADP. Sn-glycerol 3-phosphate contacts are provided by Arg82, Glu83, Tyr134, and Asp245. Glycerol contacts are provided by Arg82, Glu83, Tyr134, Asp245, and Gln246. ADP-binding residues include Thr267 and Gly311. ATP contacts are provided by Thr267, Gly311, Gln315, and Gly412. The ADP site is built by Gly412 and Asn416.

The protein belongs to the FGGY kinase family.

It catalyses the reaction glycerol + ATP = sn-glycerol 3-phosphate + ADP + H(+). The protein operates within polyol metabolism; glycerol degradation via glycerol kinase pathway; sn-glycerol 3-phosphate from glycerol: step 1/1. With respect to regulation, inhibited by fructose 1,6-bisphosphate (FBP). Key enzyme in the regulation of glycerol uptake and metabolism. Catalyzes the phosphorylation of glycerol to yield sn-glycerol 3-phosphate. This Brucella anthropi (strain ATCC 49188 / DSM 6882 / CCUG 24695 / JCM 21032 / LMG 3331 / NBRC 15819 / NCTC 12168 / Alc 37) (Ochrobactrum anthropi) protein is Glycerol kinase.